Here is a 485-residue protein sequence, read N- to C-terminus: ATP-dependent rRNA helicase RRP3 (485 aa).

Residues 1–10 show a composition bias toward basic residues; it reads MPVLKKRKLA. The interval 1 to 55 is disordered; that stretch reads MPVLKKRKLAHTAQPDPIVSDLESSSSEASQQSHDEQLTAANEQDDESPQVQREE. The segment covering 20–32 has biased composition (low complexity); the sequence is SDLESSSSEASQQ. A Q motif motif is present at residues 59 to 87; that stretch reads KSFKDLGIIDSLCEACEALGYKSPTPIQA. The 172-residue stretch at 90–261 folds into the Helicase ATP-binding domain; the sequence is IPLALQGRDL…RASLSNPLRV (172 aa). 103–110 contacts ATP; it reads AETGSGKT. Residues 209 to 212 carry the DEAD box motif; that stretch reads DEAD. Positions 285–433 constitute a Helicase C-terminal domain; sequence YKDIYLVYLL…EYKVEKEEVM (149 aa). A compositionally biased stretch (basic and acidic residues) spans 449–458; sequence EMKDLHEKRG. Positions 449–485 are disordered; that stretch reads EMKDLHEKRGSRGATLKGRRPAKGAKRGRDEMDREEG. The segment covering 465–474 has biased composition (basic residues); sequence KGRRPAKGAK. The segment covering 475–485 has biased composition (basic and acidic residues); that stretch reads RGRDEMDREEG.

The protein belongs to the DEAD box helicase family. DDX47/RRP3 subfamily. In terms of assembly, interacts with the SSU processome.

It is found in the nucleus. The enzyme catalyses ATP + H2O = ADP + phosphate + H(+). Functionally, ATP-dependent rRNA helicase required for pre-ribosomal RNA processing. Involved in the maturation of the 35S-pre-rRNA and to its cleavage to mature 18S rRNA. This is ATP-dependent rRNA helicase RRP3 from Ajellomyces capsulatus (strain NAm1 / WU24) (Darling's disease fungus).